We begin with the raw amino-acid sequence, 641 residues long: Epithelial sodium channel subunit beta (641 aa).

Residues 1–50 (MHVKKYLLKCLHRLQKGPGYTYKELLVWYCDNTNTHGPKRIIREGPKKKA) lie on the Cytoplasmic side of the membrane. Residues 51–71 (MWFLITLLFASLVCWQWGVFI) traverse the membrane as a helical segment. The Extracellular segment spans residues 72–533 (KTYLSWEVSV…GGQFGFWMGG (462 aa)). 9 cysteine pairs are disulfide-bonded: cysteine 98-cysteine 273, cysteine 185-cysteine 190, cysteine 197-cysteine 204, cysteine 250-cysteine 257, cysteine 362-cysteine 449, cysteine 387-cysteine 445, cysteine 391-cysteine 441, cysteine 400-cysteine 427, and cysteine 402-cysteine 416. Asparagine 141 carries an N-linked (GlcNAc...) asparagine glycan. N-linked (GlcNAc...) asparagine glycosylation is found at asparagine 261 and asparagine 379. The helical transmembrane segment at 534 to 554 (SVLCLIEFAEIIIDFVWITII) threads the bilayer. Over 555-641 (KLVALAKGLR…VESDSEGDAV (87 aa)) the chain is Cytoplasmic. The interval 596 to 641 (GHRSPDAEAYPDEQALPIPGTPPPNYDSLRLQPLDVVESDSEGDAV) is disordered. Positions 617-621 (PPPNY) match the PY motif; recruits WW domain-containing proteins and is thereby required for ubiquitination and inhibition of the channel by NEDD4 and NEDD4L motif. Over residues 632 to 641 (VESDSEGDAV) the composition is skewed to acidic residues. A phosphoserine mark is found at serine 634 and serine 636.

This sequence belongs to the amiloride-sensitive sodium channel (TC 1.A.6) family. SCNN1B subfamily. Component of the heterotrimeric epithelial sodium channel (ENaC) composed of an alpha/SCNN1A, a beta/SCNN1B and a gamma/SCNN1G subunit. Interacts with WWP1 (via WW domains). Interacts with WWP2 (via WW domains); inhibits the channel. Interacts with the full-length immature form of PCSK9 (pro-PCSK9). Interacts (N-glycosylated) with BPIFA1; the interaction is direct and inhibits the proteolytic processing of SCNN1A and SCNN1G and the activation of ENaC. In terms of processing, ubiquitinated. Can be ubiquitinated at multiple sites and undergo monoubiquitination and polyubiquitination. Ubiquitination by NEDD4 or NEDD4L inhibits the ENaC channel through endocytosis, intracellular retention and degradation of its individual subunits. However, some studies could not confirm the ubiquitination of this subunit of the ENaC. Post-translationally, phosphorylated on serine and threonine residues. Aldosterone and insulin increase the basal level of phosphorylation. N-glycosylated. N-glycosylation is required for interaction with BPIFA1.

It localises to the apical cell membrane. The protein localises to the cytoplasmic vesicle membrane. It carries out the reaction Na(+)(in) = Na(+)(out). With respect to regulation, originally identified and characterized by its inhibition by the diuretic drug amiloride. In terms of biological role, this is one of the three pore-forming subunits of the heterotrimeric epithelial sodium channel (ENaC), a critical regulator of sodium balance and fluid homeostasis. ENaC operates in epithelial tissues, where it mediates the electrodiffusion of sodium ions from extracellular fluid through the apical membrane of cells, with water following osmotically. It plays a key role in maintaining sodium homeostasis through electrogenic sodium reabsorption in the kidneys. Additionally, ENaC is essential for airway surface liquid homeostasis, which is crucial for proper mucus clearance. The chain is Epithelial sodium channel subunit beta from Oryctolagus cuniculus (Rabbit).